The chain runs to 257 residues: UPF0246 protein Sbal195_1149 (257 aa).

Belongs to the UPF0246 family.

This is UPF0246 protein Sbal195_1149 from Shewanella baltica (strain OS195).